The primary structure comprises 148 residues: Transcription antitermination protein NusB (148 aa).

The protein belongs to the NusB family.

In terms of biological role, involved in transcription antitermination. Required for transcription of ribosomal RNA (rRNA) genes. Binds specifically to the boxA antiterminator sequence of the ribosomal RNA (rrn) operons. The polypeptide is Transcription antitermination protein NusB (Saccharopolyspora erythraea (strain ATCC 11635 / DSM 40517 / JCM 4748 / NBRC 13426 / NCIMB 8594 / NRRL 2338)).